Reading from the N-terminus, the 906-residue chain is Protein translocase subunit SecA (906 aa).

ATP is bound by residues Q87, 105 to 109 (GEGKT), and D507. 4 residues coordinate Zn(2+): C890, C892, C901, and H902.

This sequence belongs to the SecA family. As to quaternary structure, monomer and homodimer. Part of the essential Sec protein translocation apparatus which comprises SecA, SecYEG and auxiliary proteins SecDF-YajC and YidC. Zn(2+) is required as a cofactor.

Its subcellular location is the cell inner membrane. The protein localises to the cytoplasm. The enzyme catalyses ATP + H2O + cellular proteinSide 1 = ADP + phosphate + cellular proteinSide 2.. Its function is as follows. Part of the Sec protein translocase complex. Interacts with the SecYEG preprotein conducting channel. Has a central role in coupling the hydrolysis of ATP to the transfer of proteins into and across the cell membrane, serving both as a receptor for the preprotein-SecB complex and as an ATP-driven molecular motor driving the stepwise translocation of polypeptide chains across the membrane. The sequence is that of Protein translocase subunit SecA from Laribacter hongkongensis (strain HLHK9).